The chain runs to 668 residues: UvrABC system protein B (668 aa).

The region spanning 25–413 is the Helicase ATP-binding domain; that stretch reads NGINTGLQHQ…QNTVQQVIRP (389 aa). An ATP-binding site is contributed by 38–45; sequence GVTGSGKT. Positions 91–114 match the Beta-hairpin motif; it reads YYDYYQPEAYIAASDTYIEKDSSV. The region spanning 429-595 is the Helicase C-terminal domain; it reads QVEDALSEIN…TIIKNIDDML (167 aa). Residues 629–664 enclose the UVR domain; it reads TKVIKALEKRMRAYAKELEFEKATTIRDKITEVKQK.

This sequence belongs to the UvrB family. Forms a heterotetramer with UvrA during the search for lesions. Interacts with UvrC in an incision complex.

The protein localises to the cytoplasm. In terms of biological role, the UvrABC repair system catalyzes the recognition and processing of DNA lesions. A damage recognition complex composed of 2 UvrA and 2 UvrB subunits scans DNA for abnormalities. Upon binding of the UvrA(2)B(2) complex to a putative damaged site, the DNA wraps around one UvrB monomer. DNA wrap is dependent on ATP binding by UvrB and probably causes local melting of the DNA helix, facilitating insertion of UvrB beta-hairpin between the DNA strands. Then UvrB probes one DNA strand for the presence of a lesion. If a lesion is found the UvrA subunits dissociate and the UvrB-DNA preincision complex is formed. This complex is subsequently bound by UvrC and the second UvrB is released. If no lesion is found, the DNA wraps around the other UvrB subunit that will check the other stand for damage. In Francisella tularensis subsp. tularensis (strain SCHU S4 / Schu 4), this protein is UvrABC system protein B.